Consider the following 158-residue polypeptide: Phosphopantetheine adenylyltransferase (158 aa).

Position 9 (S9) interacts with substrate. Residues 9–10 (SF) and H17 contribute to the ATP site. Substrate is bound by residues K41, T73, and R87. ATP contacts are provided by residues 88–90 (GLR), E98, and 122–128 (NQNISSS).

This sequence belongs to the bacterial CoaD family. Homohexamer. Requires Mg(2+) as cofactor.

It is found in the cytoplasm. The enzyme catalyses (R)-4'-phosphopantetheine + ATP + H(+) = 3'-dephospho-CoA + diphosphate. It participates in cofactor biosynthesis; coenzyme A biosynthesis; CoA from (R)-pantothenate: step 4/5. Reversibly transfers an adenylyl group from ATP to 4'-phosphopantetheine, yielding dephospho-CoA (dPCoA) and pyrophosphate. This is Phosphopantetheine adenylyltransferase from Leuconostoc citreum (strain KM20).